The primary structure comprises 234 residues: Leucyl/phenylalanyl-tRNA--protein transferase (234 aa).

This sequence belongs to the L/F-transferase family.

The protein localises to the cytoplasm. It catalyses the reaction N-terminal L-lysyl-[protein] + L-leucyl-tRNA(Leu) = N-terminal L-leucyl-L-lysyl-[protein] + tRNA(Leu) + H(+). The enzyme catalyses N-terminal L-arginyl-[protein] + L-leucyl-tRNA(Leu) = N-terminal L-leucyl-L-arginyl-[protein] + tRNA(Leu) + H(+). It carries out the reaction L-phenylalanyl-tRNA(Phe) + an N-terminal L-alpha-aminoacyl-[protein] = an N-terminal L-phenylalanyl-L-alpha-aminoacyl-[protein] + tRNA(Phe). Functions in the N-end rule pathway of protein degradation where it conjugates Leu, Phe and, less efficiently, Met from aminoacyl-tRNAs to the N-termini of proteins containing an N-terminal arginine or lysine. The polypeptide is Leucyl/phenylalanyl-tRNA--protein transferase (Shigella boydii serotype 18 (strain CDC 3083-94 / BS512)).